Reading from the N-terminus, the 103-residue chain is MAAVSLTVSTVKPLGDRIFIKVSASEEKTAGGILLPDSAKEKPQVGEVAQVGPGKLNDDGSRQTPEVSIGDKVLYSKYAGTDIKLGGDEYVLLSEKDILAVVG.

The protein belongs to the GroES chaperonin family. Heptamer of 7 subunits arranged in a ring. Interacts with the chaperonin GroEL.

The protein resides in the cytoplasm. Its function is as follows. Together with the chaperonin GroEL, plays an essential role in assisting protein folding. The GroEL-GroES system forms a nano-cage that allows encapsulation of the non-native substrate proteins and provides a physical environment optimized to promote and accelerate protein folding. GroES binds to the apical surface of the GroEL ring, thereby capping the opening of the GroEL channel. In Prochlorococcus marinus (strain MIT 9312), this protein is Co-chaperonin GroES.